The chain runs to 235 residues: Phosphoribosylaminoimidazole-succinocarboxamide synthase (235 aa).

The protein belongs to the SAICAR synthetase family.

It catalyses the reaction 5-amino-1-(5-phospho-D-ribosyl)imidazole-4-carboxylate + L-aspartate + ATP = (2S)-2-[5-amino-1-(5-phospho-beta-D-ribosyl)imidazole-4-carboxamido]succinate + ADP + phosphate + 2 H(+). It functions in the pathway purine metabolism; IMP biosynthesis via de novo pathway; 5-amino-1-(5-phospho-D-ribosyl)imidazole-4-carboxamide from 5-amino-1-(5-phospho-D-ribosyl)imidazole-4-carboxylate: step 1/2. The sequence is that of Phosphoribosylaminoimidazole-succinocarboxamide synthase from Streptococcus thermophilus (strain CNRZ 1066).